A 78-amino-acid chain; its full sequence is Large ribosomal subunit protein bL28 (78 aa).

The tract at residues 1–25 is disordered; sequence MSRVCQVTGKRPAVGNNRSHARNAT.

It belongs to the bacterial ribosomal protein bL28 family.

This is Large ribosomal subunit protein bL28 from Vibrio vulnificus (strain CMCP6).